The following is a 267-amino-acid chain: Proteasome subunit alpha (267 aa).

The tract at residues 231 to 267 is disordered; it reads ETLLQERDSKESAESEEPIESEEGKKTGKKSDADSSD. Basic and acidic residues-rich tracts occupy residues 234 to 243 and 252 to 267; these read LQERDSKESA and EEGKKTGKKSDADSSD.

Belongs to the peptidase T1A family. In terms of assembly, the 20S proteasome core is composed of 14 alpha and 14 beta subunits that assemble into four stacked heptameric rings, resulting in a barrel-shaped structure. The two inner rings, each composed of seven catalytic beta subunits, are sandwiched by two outer rings, each composed of seven alpha subunits. The catalytic chamber with the active sites is on the inside of the barrel. Has a gated structure, the ends of the cylinder being occluded by the N-termini of the alpha-subunits. Is capped by the proteasome-associated ATPase, ARC.

Its subcellular location is the cytoplasm. It functions in the pathway protein degradation; proteasomal Pup-dependent pathway. Its activity is regulated as follows. The formation of the proteasomal ATPase ARC-20S proteasome complex, likely via the docking of the C-termini of ARC into the intersubunit pockets in the alpha-rings, may trigger opening of the gate for substrate entry. Interconversion between the open-gate and close-gate conformations leads to a dynamic regulation of the 20S proteasome proteolysis activity. Component of the proteasome core, a large protease complex with broad specificity involved in protein degradation. In Mycobacterium ulcerans (strain Agy99), this protein is Proteasome subunit alpha.